The sequence spans 473 residues: Cell division protein FtsP (473 aa).

Positions Met-1–Ala-27 form a signal peptide, tat-type signal.

Belongs to the FtsP family. In terms of processing, predicted to be exported by the Tat system. The position of the signal peptide cleavage has not been experimentally proven.

The protein resides in the periplasm. Functionally, cell division protein that is required for growth during stress conditions. May be involved in protecting or stabilizing the divisomal assembly under conditions of stress. This is Cell division protein FtsP from Photorhabdus laumondii subsp. laumondii (strain DSM 15139 / CIP 105565 / TT01) (Photorhabdus luminescens subsp. laumondii).